Reading from the N-terminus, the 330-residue chain is Ketol-acid reductoisomerase (NADP(+)) (330 aa).

Positions 1–182 (MKKVYYDQDA…GCTRAGVFET (182 aa)) constitute a KARI N-terminal Rossmann domain. Residues 25 to 28 (YGSQ), S51, S53, and 83 to 86 (DQIQ) contribute to the NADP(+) site. H108 is an active-site residue. An NADP(+)-binding site is contributed by G134. The region spanning 183-328 (TFKEETETDL…AELRQMMPWL (146 aa)) is the KARI C-terminal knotted domain. The Mg(2+) site is built by D191, E195, E227, and E231. S252 is a substrate binding site.

This sequence belongs to the ketol-acid reductoisomerase family. Mg(2+) serves as cofactor.

It carries out the reaction (2R)-2,3-dihydroxy-3-methylbutanoate + NADP(+) = (2S)-2-acetolactate + NADPH + H(+). The catalysed reaction is (2R,3R)-2,3-dihydroxy-3-methylpentanoate + NADP(+) = (S)-2-ethyl-2-hydroxy-3-oxobutanoate + NADPH + H(+). The protein operates within amino-acid biosynthesis; L-isoleucine biosynthesis; L-isoleucine from 2-oxobutanoate: step 2/4. Its pathway is amino-acid biosynthesis; L-valine biosynthesis; L-valine from pyruvate: step 2/4. Involved in the biosynthesis of branched-chain amino acids (BCAA). Catalyzes an alkyl-migration followed by a ketol-acid reduction of (S)-2-acetolactate (S2AL) to yield (R)-2,3-dihydroxy-isovalerate. In the isomerase reaction, S2AL is rearranged via a Mg-dependent methyl migration to produce 3-hydroxy-3-methyl-2-ketobutyrate (HMKB). In the reductase reaction, this 2-ketoacid undergoes a metal-dependent reduction by NADPH to yield (R)-2,3-dihydroxy-isovalerate. The sequence is that of Ketol-acid reductoisomerase (NADP(+)) from Carboxydothermus hydrogenoformans (strain ATCC BAA-161 / DSM 6008 / Z-2901).